Here is a 1977-residue protein sequence, read N- to C-terminus: Echinoderm microtubule-associated protein-like 5 (1977 aa).

WD repeat units follow at residues 59–100 (GHSD…TVSV), 104–145 (VHTH…MLSM), 148–187 (GHTD…LTPK), 195–233 (GDLQ…RTIQ), 235–273 (AHTA…TVID), 280–321 (GYKG…LIMQ), 323–362 (HCEG…LIAR), 406–445 (DRKE…KKVG), 449–488 (GSLS…EVTS), and 561–601 (GHSA…KLKD). The interval 609-629 (ESLAESNSDESDSDLSDVPEL) is disordered. The span at 615–629 (NSDESDSDLSDVPEL) shows a compositional bias: acidic residues. WD repeat units follow at residues 725 to 766 (GHDD…PLSI), 770 to 811 (YHQY…KLSV), 814 to 853 (GSKD…LIGK), 861 to 900 (GKND…KTVK), 901 to 940 (AHDG…KTYA), 996 to 1035 (HMEG…CMLA), 1038 to 1077 (KLKK…DLVS), 1080 to 1120 (HRKD…RVGV), and 1236 to 1276 (AHST…HREK). 2 disordered regions span residues 1276-1297 (KKYC…YDSD) and 1323-1363 (PHLQ…NVGK). Residues 1281-1294 (SEESDIDSEEDGGY) show a composition bias toward acidic residues. Residues 1326-1337 (QQKEPSVDERQG) are compositionally biased toward basic and acidic residues. 10 WD repeats span residues 1420–1471 (EHND…TLSI), 1475–1516 (SHSK…KIAS), 1519–1558 (GHNQ…LLSK), 1568–1606 (ARMQ…RVVA), 1608–1654 (AHNG…RAFR), 1699–1739 (GHVD…MLNK), 1741–1782 (NLGH…GKKR), 1783–1822 (DRRC…TLNR), 1895–1934 (AEKA…KFAK), and 1940–1977 (GHSP…HMPH).

It belongs to the WD repeat EMAP family.

It localises to the cytoplasm. Its subcellular location is the cytoskeleton. In terms of biological role, may modify the assembly dynamics of microtubules, such that microtubules are slightly longer, but more dynamic. The polypeptide is Echinoderm microtubule-associated protein-like 5 (Eml5) (Mus musculus (Mouse)).